The primary structure comprises 255 residues: uncharacterized protein (255 aa).

The signal sequence occupies residues 1–23; it reads MKRLNKLVLGINLLFLVISITAG. Residue Cys-24 is the site of N-palmitoyl cysteine attachment. Cys-24 carries S-diacylglycerol cysteine lipidation.

Belongs to the staphylococcal tandem lipoprotein family.

Its subcellular location is the cell membrane. This is an uncharacterized protein from Staphylococcus aureus (strain MRSA252).